A 114-amino-acid polypeptide reads, in one-letter code: Seed trypsin/chymotrypsin inhibitor TI5-72 (114 aa).

Residues 1–28 (MELMNKKVMMKLALMVFLLSFAANVVNA) form the signal peptide. Positions 29–42 (RFDSTSFITQVLSN) are excised as a propeptide. Disulfide bonds link Cys-50–Cys-103, Cys-51–Cys-66, Cys-54–Cys-99, Cys-56–Cys-64, Cys-73–Cys-80, Cys-77–Cys-92, and Cys-82–Cys-90.

The protein belongs to the Bowman-Birk serine protease inhibitor family. As to expression, seed.

In terms of biological role, inhibitor of trypsin and of chymotrypsin. May function as a natural phytochemical defense against predators. In Pisum sativum (Garden pea), this protein is Seed trypsin/chymotrypsin inhibitor TI5-72 (TI572).